A 127-amino-acid polypeptide reads, in one-letter code: MKKITLLSGILFLIGYSDAEVFESQNVRVKRNDFTNNYGYGPFGIGPTNGGFDSYGFYRDKFYNSGLPPLYSFASYRNYYHEISFHKNKYGQPAPTDFETLQQERYGPYYDGVWGYADHSKNWFGKR.

This is an uncharacterized protein from Caenorhabditis elegans.